Consider the following 1144-residue polypeptide: MALFRKFFHRKPPEGLLEISERVYVFDCCLTTDMLEDEDYRVYVSRIMSQLREQFPGASFMVFNFRDGDSRSRMESVLTEYDMTIMDYPRHYEGCPLLTMETVHHFLKSAESWLLLSQQNILLSHCELGGWPTLAFMLASLLLYRKQFSGEHRTLEMIYKQAPRELLQLMSPLNPLPSQLRFLQYISRRNVGSQWPPLDQALTLDCVNLRLIPDFDGEGGCRPIFRIYGQDPFMASDRTSKVLFSMPKRSKAVRQYKQADCELVKIDINCHILGDVVLECITLGSDLEREEMMFRVVFNTAFLRSNILTLNRGEIDVLWNTTDRFPKDFSAEVIFSEMGAGKKLASVDLPHMEEKDVLPMEAFAKVQEIFSEAEWLDPNSDVAVTVFNQITAANILQESLDSGSPRSPDSRSLLESALEKVKEKTKLMISENIVSSPDTSSPEKEKDTMSSHKSYADPNSILKKVDESRGLRVSVQRNVHSKIFSPRMVQSPVTSPLPNRSPTQGSPASISRFHSSPSSLGITSILHDHGSCKDEESTSSSPASPSISFLPTLHPLTSSQPKKASPQCPQSPTPVHSNGPPSAEAAVTSSPLPPLKPLRILSRPPPPPPPPPISSLRSTPSPSSTSNSIATQGPPPPPPPPPLQSHRSALSSSPLPPPLPPKKLLATTNPPPPPPPPLHSNSRMGAPTSSLVLKSPPVPPPPAPAPLSRSHNGNIPPVPGPPLGLKGRGILQNLKGQGQTRKANLKPYHWLKLTRAVQGSLWAEAQKSDEAATAPDFDISELEKLFSAVNLSSDSENNGGKSGRRARPKVEKVQLIELRRAYNCEIMLSKVKIPLPDLMSSVLALDESVIDVDQVDNLIKFCPTKEEAELLKGFTGNKETLGRCEQFFLELLKVPRVETKLRVFSFKIQFHSQVTDLRRGLNTIHSAANEVRGSAKLKRIMQTILSLGNALNHGTARGSAIGFRLDSLLKLTDTRSRNSKMTLMHYLCKVLAEKLPELLNFPKDLVSLEAATKIQLKYLAEEMQAISKGLEKVVQEFTASETDGQISKHFRMNLKEFLSVAEGEVRSLASLYSTVGGSADALALYFGEDPARVPFEQVVSTLQNFVRIFVRSHEENCKQVEFEKKRAQKEAENEKLKKGVYNEN.

The Phosphatase tensin-type domain maps to 17–193; it reads LEISERVYVF…QYISRRNVGS (177 aa). Cys126 functions as the Phosphocysteine intermediate in the catalytic mechanism. The region spanning 199–338 is the C2 tensin-type domain; it reads DQALTLDCVN…FSAEVIFSEM (140 aa). Disordered stretches follow at residues 429–463 and 482–729; these read ISEN…SILK and KIFS…KGRG. The span at 441 to 450 shows a compositional bias: basic and acidic residues; it reads SPEKEKDTMS. A compositionally biased stretch (polar residues) spans 491-522; that stretch reads SPVTSPLPNRSPTQGSPASISRFHSSPSSLGI. A compositionally biased stretch (basic and acidic residues) spans 526-536; sequence LHDHGSCKDEE. Over residues 538-548 the composition is skewed to low complexity; it reads TSSSPASPSIS. Residues 555–580 show a composition bias toward polar residues; it reads PLTSSQPKKASPQCPQSPTPVHSNGP. The segment covering 603-613 has biased composition (pro residues); sequence RPPPPPPPPPI. Positions 614–629 are enriched in low complexity; sequence SSLRSTPSPSSTSNSI. The segment covering 633–643 has biased composition (pro residues); sequence GPPPPPPPPPL. The span at 644-653 shows a compositional bias: low complexity; it reads QSHRSALSSS. Residues 669-678 are compositionally biased toward pro residues; it reads NPPPPPPPPL. Over residues 679–695 the composition is skewed to low complexity; that stretch reads HSNSRMGAPTSSLVLKS. A compositionally biased stretch (pro residues) spans 696–705; it reads PPVPPPPAPA. The 401-residue stretch at 735 to 1135 folds into the FH2 domain; sequence KGQGQTRKAN…RAQKEAENEK (401 aa).

This sequence belongs to the formin-like family. Class-II subfamily.

This is Formin-like protein 18 (FH18) from Arabidopsis thaliana (Mouse-ear cress).